We begin with the raw amino-acid sequence, 352 residues long: Methylthioribose-1-phosphate isomerase (352 aa).

Substrate is bound by residues Arg-55 to Ala-57, Arg-98, and Gln-201. The active-site Proton donor is the Asp-242. Asn-252 to Lys-253 lines the substrate pocket.

The protein belongs to the eIF-2B alpha/beta/delta subunits family. MtnA subfamily.

It carries out the reaction 5-(methylsulfanyl)-alpha-D-ribose 1-phosphate = 5-(methylsulfanyl)-D-ribulose 1-phosphate. It participates in amino-acid biosynthesis; L-methionine biosynthesis via salvage pathway; L-methionine from S-methyl-5-thio-alpha-D-ribose 1-phosphate: step 1/6. Functionally, catalyzes the interconversion of methylthioribose-1-phosphate (MTR-1-P) into methylthioribulose-1-phosphate (MTRu-1-P). This is Methylthioribose-1-phosphate isomerase from Methylococcus capsulatus (strain ATCC 33009 / NCIMB 11132 / Bath).